Here is a 1146-residue protein sequence, read N- to C-terminus: MNIFYIFLFLLSFVQGLEHTHRRGSLVKRAVCYDTDQVPLNIFFGYNRADKTDSNKNMALNIFNVFRGFLAGEGGESFYNSNGNVYGFMWVGSMVHNRGFKDNILPIMENEVKNYGIPKTLYLEYDGGGDPMKSFGIILDTTSRDTVVKAAKLWSQGKKLNSYEGSKNYQATACYLSYAYRKPIVNDNFVGTCDYFTLESGKTPADQSGINGESLQGYNPNLDFSKLSAGQPICKTIGNPPNFKPSKNSDGSCKTYKVSSGESCSSIAVKYYPLSLNDIENYNKGNYGWKGCSSLQKDYNLCVSDGSAPRPVSNPIAECGPLAPGEKYNAKCPLNACCSEFGFCGLTKDYCDKKSSTTGAPGTDGCFSNCGYGSTSNVKSSTFKKIAYWLDAKDKLAMDPKNIPNGPYDILHYAFVNINSDFSIDDSAFSKSAFLKVTSSKKIPSFGGWDFSTSPSTYTIFRNAVKTDQNRNTFANNLINFMNKYNLDGIDLDWEYPGAPDIPDIPADDSSSGSNYLTFLKLLKGKMPSGKTLSIAIPSSYWYLKNFPISDIQNTVDYMVYMTYDIHGIWEYGKANSYINCHTPRKEIEDAIKMLDKAGVKFNKVFGGVANYGRSYKMVNTNCYNYGCGFQREGGNSRDMTNTPGVLSDSEIIDIDSSDKKNDRWVDTNTDCIFMKYDGNSVVSWPKSRYDLEDMFKNYGFAGTSLWAANYFKHDEWKNDEDDNNDDTEDPFDEENVYFDVYDCKNKAGYDLDNPVYGCRLETAINIIIWNGTESVNTVLNILNDYDNYIKYYEALTRAHYDSVMEKYEKWLFEEDGYYTYYTDVDGDDIIITPPDKKKRDYIQEKYSFEKEFMMSQNMTELTEIKVNKTINFMLNGTSLAVKEYNNEKVLYKRGDIPPPGSNNRLIRNSIILDKDKEAAIASFKQYSGIELSKDSFVQRDKDKKFDLNGKHYTFMHSTILNAIVLFPNVLTNIDSDYIHHISDLIEQAHNSLGNESPDNIYEVLESVVVFMSVSEIADYTYTEGKKIKEKYDKMKKTMIVGIILGIIGGLSLFLGPIGIATSVLADFALLGADAAINGELNPSDLAFALAGLFLPVFASLGKTFKFAEALQKININKSKNFDNLNEFEKIRFFRSKLGKVKMCGS.

Positions 1–17 are cleaved as a signal peptide; it reads MNIFYIFLFLLSFVQGL. A propeptide spanning residues 18 to 29 is cleaved from the precursor; it reads EHTHRRGSLVKR. LysM domains are found at residues 205-234 and 254-303; these read ADQS…QPIC and KTYK…NLCV. In terms of domain architecture, Chitin-binding type-1 spans 316–372; that stretch reads IAECGPLAPGEKYNAKCPLNACCSEFGFCGLTKDYCDKKSSTTGAPGTDGCFSNCGY. 4 disulfides stabilise this stretch: C319–C338, C332–C344, C337–C351, and C366–C370. The region spanning 383-735 is the GH18 domain; that stretch reads FKKIAYWLDA…DDTEDPFDEE (353 aa). Residues I424 and 447-450 each bind chitin; that span reads GGWD. E495 acts as the Proton donor in catalysis. Chitin is bound by residues Y496, 562-565, and W707; that span reads MTYD. Residues N771, N858, N868, N876, and N1117 are each glycosylated (N-linked (GlcNAc...) asparagine).

Belongs to the glycosyl hydrolase 18 family. In terms of assembly, the killer toxin is composed of three subunits: alpha, beta and gamma. In terms of processing, RF2 is potentially split by membrane-bound basic amino acid-specific peptidase to yield the alpha and beta subunits.

The catalysed reaction is Random endo-hydrolysis of N-acetyl-beta-D-glucosaminide (1-&gt;4)-beta-linkages in chitin and chitodextrins.. Its function is as follows. The alpha subunit is a potent exochitinase. Along with the beta subunit it plays a role in the initial interaction of the toxin with sensitive cells and allow the gamma subunit (the active toxin) to gain entry into the cell. The polypeptide is Killer toxin subunits alpha/beta (Kluyveromyces lactis (strain ATCC 8585 / CBS 2359 / DSM 70799 / NBRC 1267 / NRRL Y-1140 / WM37) (Yeast)).